Reading from the N-terminus, the 232-residue chain is Lipoprotein-releasing system ATP-binding protein LolD (232 aa).

The 221-residue stretch at 11 to 231 (VYLHDIKRQY…SIEDGVIVEL (221 aa)) folds into the ABC transporter domain. 47 to 54 (APSGSGKS) is an ATP binding site.

This sequence belongs to the ABC transporter superfamily. Lipoprotein translocase (TC 3.A.1.125) family. As to quaternary structure, the complex is composed of two ATP-binding proteins (LolD) and two transmembrane proteins (LolC and LolE).

The protein localises to the cell inner membrane. Functionally, part of the ABC transporter complex LolCDE involved in the translocation of mature outer membrane-directed lipoproteins, from the inner membrane to the periplasmic chaperone, LolA. Responsible for the formation of the LolA-lipoprotein complex in an ATP-dependent manner. In Rhodopseudomonas palustris (strain BisB5), this protein is Lipoprotein-releasing system ATP-binding protein LolD.